A 21-amino-acid polypeptide reads, in one-letter code: Peptide PGLa-R5 (21 aa).

The residue at position 21 (leucine 21) is a Leucine amide.

Expressed by the skin glands.

The protein resides in the secreted. Antimicrobial peptide. The sequence is that of Peptide PGLa-R5 from Xenopus ruwenzoriensis (Uganda clawed frog).